A 1140-amino-acid chain; its full sequence is Calcium-activated potassium channel slo-1 (1140 aa).

Residues Met-1 to Lys-44 lie on the Extracellular side of the membrane. A helical transmembrane segment spans residues Tyr-45–Ile-65. The Cytoplasmic portion of the chain corresponds to Trp-66–Arg-139. The chain crosses the membrane as a helical span at residues Phe-140–Ser-161. Topologically, residues Phe-162–Ser-178 are extracellular. A helical membrane pass occupies residues Gln-179–Ala-199. Topologically, residues Ala-200–Lys-203 are cytoplasmic. Residues Val-204 to Val-224 traverse the membrane as a helical segment. At Ala-225–Leu-228 the chain is on the extracellular side. The helical; Voltage-sensor transmembrane segment at Gln-229–Ile-249 threads the bilayer. The Cytoplasmic segment spans residues Leu-250–Leu-264. A helical membrane pass occupies residues Thr-265–Leu-285. Topologically, residues Glu-286–His-299 are extracellular. Positions Arg-300–Ile-322 form an intramembrane region, pore-forming. The Selectivity for potassium motif lies at Thr-316–Tyr-319. At Tyr-323–Leu-331 the chain is on the extracellular side. A helical membrane pass occupies residues Phe-332–Ala-352. The Cytoplasmic portion of the chain corresponds to Asp-353–Phe-1140. Residues Lys-371–Cys-514 form the RCK N-terminal 1 domain. The segment S7 stretch occupies residues Leu-520 to Phe-540. Residues Met-578–Ile-598 are segment S8. Residues Val-797–Leu-817 form a segment S9 region. The 155-residue stretch at Asn-799–Met-953 folds into the RCK N-terminal 2 domain. Positions Thr-955–Glu-977 match the Calcium bowl motif. Ca(2+) contacts are provided by Gln-964, Asp-967, Asp-970, and Asp-972. Residues Phe-984–Phe-1004 form a segment S10 region.

Belongs to the potassium channel family. Calcium-activated (TC 1.A.1.3) subfamily. Slo sub-subfamily. In terms of assembly, homotetramer; which constitutes the calcium-activated potassium channel. In terms of processing, phosphorylated. Expressed in synaptic regions of the nervous system including in both the nerve ring and nerve cords, as well as in the body-wall and vulval muscle. Expressed broadly in motor neurons. Forms puncta at presynaptic terminals of neurons, muscle excitation sites, and in the dorsal nerve cord.

It localises to the cell membrane. The protein localises to the synapse. In terms of biological role, potassium channel activated by both membrane depolarization or increase in cytosolic Ca(2+) that mediates export of K(+). Its activation dampens the excitatory events that elevate the cytosolic Ca(2+) concentration and/or depolarize the cell membrane. It therefore contributes to repolarization of the membrane potential. Essential for the regulation of neurotransmitter release at synapses. Regulates longevity and age-associated decline in motor activity in mid-late life, by acting in motor neurons and through daf-16 in the intestine. When clustered in neurons, mediates ethanol-induced suppression of locomotory and egg-laying behaviors. The sequence is that of Calcium-activated potassium channel slo-1 from Caenorhabditis elegans.